A 584-amino-acid chain; its full sequence is A-type ATP synthase subunit A (584 aa).

234–241 (GPFGSGKT) lines the ATP pocket.

Belongs to the ATPase alpha/beta chains family. In terms of assembly, has multiple subunits with at least A(3), B(3), C, D, E, F, H, I and proteolipid K(x).

The protein localises to the cell membrane. It catalyses the reaction ATP + H2O + 4 H(+)(in) = ADP + phosphate + 5 H(+)(out). Component of the A-type ATP synthase that produces ATP from ADP in the presence of a proton gradient across the membrane. The A chain is the catalytic subunit. The sequence is that of A-type ATP synthase subunit A from Methanoculleus marisnigri (strain ATCC 35101 / DSM 1498 / JR1).